A 100-amino-acid chain; its full sequence is Putative septation protein SpoVG (100 aa).

Belongs to the SpoVG family.

In terms of biological role, could be involved in septation. This Clostridium novyi (strain NT) protein is Putative septation protein SpoVG.